A 1009-amino-acid polypeptide reads, in one-letter code: Glutamate receptor ionotropic, delta-1 (1009 aa).

Residues 1-20 (MEALTLWLLPWICQCVTVRA) form the signal peptide. Residues 21 to 436 (DSIIHIGAIF…ERPMGSRLQG (416 aa)) form an interaction with CBLN1 region. The Extracellular portion of the chain corresponds to 21–562 (DSIIHIGAIF…SIFSLFAPFD (542 aa)). 3 cysteine pairs are disulfide-bonded: Cys80–Cys351, Cys96–Cys128, and Cys294–Cys306. Asn131 and Asn200 each carry an N-linked (GlcNAc...) asparagine glycan. Residues Asn422 and Asn498 are each glycosylated (N-linked (GlcNAc...) asparagine). Residues Glu527, Val530, and Asp531 each coordinate Ca(2+). Residues 563–583 (FAVWACIAAAIPVVGVLIFVL) traverse the membrane as a helical segment. The Cytoplasmic segment spans residues 584–637 (NRIQAVRSQSATQPRPSASATLHSAIWIVYGAFVQQGGESSVNSVAMRIVMGSW). Residues 638 to 658 (WLFTLIVCSSYTANLAAFLTV) form a helical membrane-spanning segment. Topologically, residues 659-830 (SRMDNPIRTF…TEGKSLKLHS (172 aa)) are extracellular. Ca(2+) is bound by residues Asp753, Asp755, and Ser757. Residues 831–851 (FAGVFCILAIGLLLACLVAAL) traverse the membrane as a helical segment. The Cytoplasmic portion of the chain corresponds to 852 to 1009 (ELWWNSNRCH…ALDTSHGTSI (158 aa)). A compositionally biased stretch (polar residues) spans 931 to 942 (LPEQSSHGTSRT). Residues 931-960 (LPEQSSHGTSRTLSSGPSSNLPLPLSSSAT) form a disordered region. A compositionally biased stretch (low complexity) spans 943-958 (LSSGPSSNLPLPLSSS).

The protein belongs to the glutamate-gated ion channel (TC 1.A.10.1) family. GRID1 subfamily. Homodimer. Interacts (via extracellular N-terminal domain) with CBLN1 (via C1q domain), and more weakly with CBLN2; the interactions mediate the trans-synaptic adhesion complexes also with neurexins and are required for ligand-gated cation channel activity. As to expression, equally in forebrain and cerebellum.

The protein resides in the postsynaptic cell membrane. The catalysed reaction is Ca(2+)(in) = Ca(2+)(out). The enzyme catalyses Na(+)(in) = Na(+)(out). Functionally, member of the ionotropic glutamate receptor family, which plays a crucial role in synaptic organization and signal transduction in the central nervous system. Although it shares structural features with ionotropic glutamate receptors, does not bind glutamate as a primary ligand. Instead, forms trans-synaptic adhesion complexes with presynaptic neurexins and cerebellins, regulating NMDA and AMPA receptor activity and influencing synaptic plasticity through signal transduction. In the presence of NRX1B-CBLN1, forms cation-selective channels that are proposed to be gated by glycine and D-serine. However, recent research disputes this ligand-gated cation channel activity. Cation-selective ion channel can be triggered by GRM1 in dopaminergic neurons. Also acts as a receptor for GABA, modulating inhibitory synaptic plasticity through non-ionotropic mechanisms. This is Glutamate receptor ionotropic, delta-1 (Grid1) from Mus musculus (Mouse).